Here is a 475-residue protein sequence, read N- to C-terminus: Ribulose bisphosphate carboxylase large chain (475 aa).

A propeptide spanning residues Met1 to Ser2 is cleaved from the precursor. Pro3 is modified (N-acetylproline). At Lys14 the chain carries N6,N6,N6-trimethyllysine. The substrate site is built by Asn123 and Thr173. Lys175 (proton acceptor) is an active-site residue. Residue Lys177 participates in substrate binding. The Mg(2+) site is built by Lys201, Asp203, and Glu204. Lys201 carries the post-translational modification N6-carboxylysine. His294 functions as the Proton acceptor in the catalytic mechanism. Substrate-binding residues include Arg295, His327, and Ser379.

Belongs to the RuBisCO large chain family. Type I subfamily. Heterohexadecamer of 8 large chains and 8 small chains; disulfide-linked. The disulfide link is formed within the large subunit homodimers. It depends on Mg(2+) as a cofactor. In terms of processing, the disulfide bond which can form in the large chain dimeric partners within the hexadecamer appears to be associated with oxidative stress and protein turnover.

The protein localises to the plastid. Its subcellular location is the chloroplast. The catalysed reaction is 2 (2R)-3-phosphoglycerate + 2 H(+) = D-ribulose 1,5-bisphosphate + CO2 + H2O. It carries out the reaction D-ribulose 1,5-bisphosphate + O2 = 2-phosphoglycolate + (2R)-3-phosphoglycerate + 2 H(+). In terms of biological role, ruBisCO catalyzes two reactions: the carboxylation of D-ribulose 1,5-bisphosphate, the primary event in carbon dioxide fixation, as well as the oxidative fragmentation of the pentose substrate in the photorespiration process. Both reactions occur simultaneously and in competition at the same active site. The chain is Ribulose bisphosphate carboxylase large chain from Cedrus deodara (Deodar cedar).